Reading from the N-terminus, the 677-residue chain is Bargin (677 aa).

Composition is skewed to low complexity over residues 1–13 (MDRGLPGPATPAV) and 29–39 (APHAAAGPDGQ). 2 disordered regions span residues 1 to 39 (MDRGLPGPATPAVTPQPPARPQDDEEAAAPHAAAGPDGQ) and 168 to 190 (SQATKNSGSSQGLGGSPGSHSHT). The region spanning 25–270 (EEAAAPHAAA…RENHGQADHS (246 aa)) is the BAR domain. A phosphoserine mark is found at serine 183, serine 270, and serine 272. One can recognise a Rho-GAP domain in the interval 284–477 (VSLATHLQEL…ALIQSADTLF (194 aa)). The tract at residues 504 to 577 (SEELPSTAVP…DMARRSTGSL (74 aa)) is disordered. The span at 516–530 (ATTPAPAPAPAPAPA) shows a compositional bias: pro residues. Phosphoserine occurs at positions 552 and 558. Positions 574–677 (TGSLAAAVET…IADLTEGLED (104 aa)) are mediates non-covalent binding of poly-ubiquitin chains.

In terms of tissue distribution, expressed in brain (at protein level).

It localises to the cell membrane. The protein resides in the cytoplasm. The protein localises to the cytosol. Functionally, GTPase activating protein (GAP) which specifically converts GTP-bound RAC1 and CDC42 in their inactive GDP-bound form. The GAP activity is enhanced by the non-covalent binding of K-29 and K-48 polyubiquitin chains. The sequence is that of Bargin from Homo sapiens (Human).